Reading from the N-terminus, the 80-residue chain is Mu-conotoxin BuIIIC (80 aa).

Residues 1-22 (MMSKLGVLLTICLLLFPLFALP) form the signal peptide. A propeptide spanning residues 23–51 (QDGDQPADRPAERMQDDLSSEQHPLFEKR) is cleaved from the precursor. 3 cysteine pairs are disulfide-bonded: C56-C70, C57-C76, and C66-C77. At C77 the chain carries Cysteine amide.

This sequence belongs to the conotoxin M superfamily. As to expression, expressed by the venom duct.

The protein localises to the secreted. Mu-conotoxins block voltage-gated sodium channels. Extremely potent inhibitor of Nav1.4/SCN4A (96% inhibition at 1 uM). The inhibition is very slowly reversible. The protein is Mu-conotoxin BuIIIC of Conus bullatus (Bubble cone).